Consider the following 591-residue polypeptide: Aspartate--tRNA(Asp/Asn) ligase (591 aa).

E175 contributes to the L-aspartate binding site. Positions 199–202 are aspartate; it reads QQFK. L-aspartate contacts are provided by R221 and H453. 221–223 serves as a coordination point for ATP; that stretch reads RDE. Position 486 (E486) interacts with ATP. R493 contacts L-aspartate. Residue 538–541 coordinates ATP; sequence GIDR.

The protein belongs to the class-II aminoacyl-tRNA synthetase family. Type 1 subfamily. Homodimer.

It localises to the cytoplasm. The enzyme catalyses tRNA(Asx) + L-aspartate + ATP = L-aspartyl-tRNA(Asx) + AMP + diphosphate. In terms of biological role, aspartyl-tRNA synthetase with relaxed tRNA specificity since it is able to aspartylate not only its cognate tRNA(Asp) but also tRNA(Asn). Reaction proceeds in two steps: L-aspartate is first activated by ATP to form Asp-AMP and then transferred to the acceptor end of tRNA(Asp/Asn). This Roseobacter denitrificans (strain ATCC 33942 / OCh 114) (Erythrobacter sp. (strain OCh 114)) protein is Aspartate--tRNA(Asp/Asn) ligase.